Reading from the N-terminus, the 306-residue chain is Bifunctional protein FolD (306 aa).

Residues 166 to 168 and I232 each bind NADP(+); that span reads GRS.

It belongs to the tetrahydrofolate dehydrogenase/cyclohydrolase family. In terms of assembly, homodimer.

It carries out the reaction (6R)-5,10-methylene-5,6,7,8-tetrahydrofolate + NADP(+) = (6R)-5,10-methenyltetrahydrofolate + NADPH. The enzyme catalyses (6R)-5,10-methenyltetrahydrofolate + H2O = (6R)-10-formyltetrahydrofolate + H(+). It functions in the pathway one-carbon metabolism; tetrahydrofolate interconversion. In terms of biological role, catalyzes the oxidation of 5,10-methylenetetrahydrofolate to 5,10-methenyltetrahydrofolate and then the hydrolysis of 5,10-methenyltetrahydrofolate to 10-formyltetrahydrofolate. The polypeptide is Bifunctional protein FolD (Methylorubrum extorquens (strain CM4 / NCIMB 13688) (Methylobacterium extorquens)).